Here is a 483-residue protein sequence, read N- to C-terminus: RNA-binding protein Nova-1 (483 aa).

Positions 1-44 (MMAAAPIQQNGTHTGVPIDLDPPDSRKRPLEAPPEAGSTKRTNT) are disordered. The Bipartite nuclear localization signal signature appears at 27–43 (KRPLEAPPEAGSTKRTN). KH domains are found at residues 49–116 (QYFL…HGFI), 147–213 (IKQV…VELI), and 397–464 (KDVV…QYLI). Positions 395-479 (GSKDVVEIAV…YEQGVRAANP (85 aa)) are required for RNA binding.

As to quaternary structure, interacts with PTBP2; the interaction is direct.

It localises to the nucleus. Functions to regulate alternative splicing in neurons by binding pre-mRNA in a sequence-specific manner to activate exon inclusion or exclusion. It binds specifically to the sequences 5'-YCAY-3' and regulates splicing in only a subset of regulated exons. Binding to an exonic 5'-YCAY-3' cluster changes the protein complexes assembled on pre-mRNA, blocking U1 snRNP binding and exon inclusion, whereas binding to an intronic 5'-YCAY-3' cluster enhances spliceosome assembly and exon inclusion. Binding to 5'-YCAY-3' clusters results in a local and asymmetric action to regulate spliceosome assembly and alternative splicing in neurons. Binding to an exonic 5'-YCAY-3' cluster changed the protein complexes assembled on pre-mRNA, blocking U1 snRNP (small nuclear ribonucleoprotein) binding and exon inclusion, whereas binding to an intronic 5'-YCAY-3' cluster enhanced spliceosome assembly and exon inclusion. With NOVA1, they perform unique biological functions in different brain areas and cell types. Autoregulates its own expression by acting as a splicing repressor. Acts to activate the inclusion of exon E3A in the glycine receptor alpha-2 chain and of exon E9 in gamma-aminobutyric-acid receptor gamma-2 subunit via a distal downstream UCAU-rich intronic splicing enhancer. Acts to regulate a novel glycine receptor alpha-2 chain splice variant (alpha-2N) in developing spinal cord. The polypeptide is RNA-binding protein Nova-1 (NOVA1) (Macaca fascicularis (Crab-eating macaque)).